The chain runs to 195 residues: Imidazoleglycerol-phosphate dehydratase (195 aa).

It belongs to the imidazoleglycerol-phosphate dehydratase family.

The protein resides in the cytoplasm. It carries out the reaction D-erythro-1-(imidazol-4-yl)glycerol 3-phosphate = 3-(imidazol-4-yl)-2-oxopropyl phosphate + H2O. It participates in amino-acid biosynthesis; L-histidine biosynthesis; L-histidine from 5-phospho-alpha-D-ribose 1-diphosphate: step 6/9. The chain is Imidazoleglycerol-phosphate dehydratase from Aminomonas aminovorus.